The following is a 454-amino-acid chain: N-acetyl-S-(2-succino)cysteine lyase (454 aa).

A fumarate-binding site is contributed by 106–107; that stretch reads TT. Catalysis depends on His-154, which acts as the Proton donor/acceptor. Residue Arg-233 participates in fumarate binding. Ser-277 (proton donor/acceptor) is an active-site residue. Residues Thr-278 and 283–285 contribute to the fumarate site; that span reads KRN.

The protein belongs to the lyase 1 family.

The enzyme catalyses N-acetyl-S-(2-succino)-L-cysteine = N-acetyl-L-cysteine + fumarate. It participates in amino-acid biosynthesis; L-cysteine biosynthesis. Its function is as follows. Catalyzes the cleavage of N-acetyl-S-(2-succino)cysteine into fumarate and N-acetylcysteine. Is involved in a S-(2-succino)cysteine (2SC) degradation pathway that allows the bacterium to recover cysteine from 2SC and to detoxify 2SC that may be a toxic metabolite. Can also perform the reverse reaction in vitro, and has minor activity against 2SC and other small molecule thiols. This Dickeya dadantii (strain 3937) (Erwinia chrysanthemi (strain 3937)) protein is N-acetyl-S-(2-succino)cysteine lyase.